A 430-amino-acid chain; its full sequence is Gamma-glutamyl phosphate reductase (430 aa).

Belongs to the gamma-glutamyl phosphate reductase family.

The protein localises to the cytoplasm. The catalysed reaction is L-glutamate 5-semialdehyde + phosphate + NADP(+) = L-glutamyl 5-phosphate + NADPH + H(+). The protein operates within amino-acid biosynthesis; L-proline biosynthesis; L-glutamate 5-semialdehyde from L-glutamate: step 2/2. Its function is as follows. Catalyzes the NADPH-dependent reduction of L-glutamate 5-phosphate into L-glutamate 5-semialdehyde and phosphate. The product spontaneously undergoes cyclization to form 1-pyrroline-5-carboxylate. The chain is Gamma-glutamyl phosphate reductase from Rhodopseudomonas palustris (strain BisA53).